Here is a 1026-residue protein sequence, read N- to C-terminus: uncharacterized protein (1026 aa).

4 WD repeats span residues 14–53 (LLDE…HFTL), 62–104 (HSVS…RRAT), 148–187 (GHED…LTFK), and 937–977 (NAEC…VKFL).

It is found in the cytoplasm. The protein resides in the nucleus. This is an uncharacterized protein from Schizosaccharomyces pombe (strain 972 / ATCC 24843) (Fission yeast).